Consider the following 113-residue polypeptide: Endoribonuclease SymE (113 aa).

The SpoVT-AbrB domain occupies 29-74 (SRYPDYSRIPAITLKGQWLEAAGFATGTAIDVKVMEGCIVLTAQPP).

The protein belongs to the SymE family.

It is found in the cytoplasm. In terms of biological role, involved in the degradation and recycling of damaged RNA. It is itself a target for degradation by the ATP-dependent protease Lon. This chain is Endoribonuclease SymE, found in Escherichia coli O1:K1 / APEC.